We begin with the raw amino-acid sequence, 332 residues long: Transaldolase (332 aa).

The active-site Schiff-base intermediate with substrate is Lys-136.

Belongs to the transaldolase family. Type 1 subfamily.

The protein localises to the cytoplasm. It catalyses the reaction D-sedoheptulose 7-phosphate + D-glyceraldehyde 3-phosphate = D-erythrose 4-phosphate + beta-D-fructose 6-phosphate. It participates in carbohydrate degradation; pentose phosphate pathway; D-glyceraldehyde 3-phosphate and beta-D-fructose 6-phosphate from D-ribose 5-phosphate and D-xylulose 5-phosphate (non-oxidative stage): step 2/3. Its function is as follows. Transaldolase is important for the balance of metabolites in the pentose-phosphate pathway. This is Transaldolase from Trichormus variabilis (strain ATCC 29413 / PCC 7937) (Anabaena variabilis).